Reading from the N-terminus, the 265-residue chain is uncharacterized protein (265 aa).

The tract at residues 233-265 (STACGSDQRPTRLPRASCSSRSISGSAARPWKR) is disordered. The span at 247–265 (RASCSSRSISGSAARPWKR) shows a compositional bias: low complexity.

This is an uncharacterized protein from Escherichia coli.